Reading from the N-terminus, the 88-residue chain is Cuticle protein 70, isoforms A and B (88 aa).

Repeat copies occupy residues 7-10 (AAPA), 48-51 (AAPA), 55-58 (AAVP), 60-63 (AAPV), and 66-69 (AAPV).

Component of the cuticle of migratory locust which contains more than 100 different structural proteins. The polypeptide is Cuticle protein 70, isoforms A and B (Locusta migratoria (Migratory locust)).